The primary structure comprises 514 residues: JmjC domain-containing histone demethylation protein 1 (514 aa).

A PHD-type zinc finger spans residues 4–62 (IDTCPICVESPLEDSTTFNNIAWLQCDICNQWFHASCLKIPKIEVNNLHSYHCEGCSKS). The region spanning 220 to 384 (SDVDSFGKSF…MHLRIYEIEK (165 aa)) is the JmjC domain. Thr267 serves as a coordination point for substrate. The Fe cation site is built by His270 and Asp272. Position 287 (Lys287) interacts with substrate. His352 contacts Fe cation. The span at 432–454 (KSEAHSRGEVHTKTETHAVKDEP) shows a compositional bias: basic and acidic residues. The tract at residues 432-456 (KSEAHSRGEVHTKTETHAVKDEPQP) is disordered.

It belongs to the JHDM1 histone demethylase family. Fe(2+) serves as cofactor.

The protein resides in the nucleus. It catalyses the reaction N(6),N(6)-dimethyl-L-lysyl(36)-[histone H3] + 2 2-oxoglutarate + 2 O2 = L-lysyl(36)-[histone H3] + 2 formaldehyde + 2 succinate + 2 CO2. In terms of biological role, histone demethylase that specifically demethylates 'Lys-36' of histone H3, thereby playing a central role in histone code. The polypeptide is JmjC domain-containing histone demethylation protein 1 (JHD1) (Debaryomyces hansenii (strain ATCC 36239 / CBS 767 / BCRC 21394 / JCM 1990 / NBRC 0083 / IGC 2968) (Yeast)).